Here is a 766-residue protein sequence, read N- to C-terminus: LPS-assembly protein LptD (766 aa).

The N-terminal stretch at 1 to 18 (MQIRYFLALSLLPNIVLA) is a signal peptide.

The protein belongs to the LptD family. As to quaternary structure, component of the lipopolysaccharide transport and assembly complex. Interacts with LptE and LptA.

It localises to the cell outer membrane. Its function is as follows. Together with LptE, is involved in the assembly of lipopolysaccharide (LPS) at the surface of the outer membrane. This Shewanella frigidimarina (strain NCIMB 400) protein is LPS-assembly protein LptD.